The following is a 460-amino-acid chain: Tol-Pal system protein TolB (460 aa).

An N-terminal signal peptide occupies residues 1–22 (MTIFQKSFILLIIWNFSLFAFS).

The protein belongs to the TolB family. In terms of assembly, the Tol-Pal system is composed of five core proteins: the inner membrane proteins TolA, TolQ and TolR, the periplasmic protein TolB and the outer membrane protein Pal. They form a network linking the inner and outer membranes and the peptidoglycan layer.

The protein resides in the periplasm. In terms of biological role, part of the Tol-Pal system, which plays a role in outer membrane invagination during cell division and is important for maintaining outer membrane integrity. TolB occupies a key intermediary position in the Tol-Pal system because it communicates directly with both membrane-embedded components, Pal in the outer membrane and TolA in the inner membrane. The protein is Tol-Pal system protein TolB of Blochmanniella floridana.